The primary structure comprises 488 residues: MQYRDLRDFISGLEKRGELKRVTAAVSPVLEMTEICDRTLRKQGPALLFENPTGFDMPVLGNLFGTPGRVALGMGAEDVSELREIGKLLAFLKEPEPPKGLKDAWSKLPIYKKVISMAPKVLKDAPCQEVIVEGDDVDLTKIPVQHCWPGDAAPLITWGLTITKGPNKERQNLGIYRQQVIGRNKVIMRWLSHRGGALDFREWCEKYPDRPYPVAVALGADPATILGAVTPVPDTLSEYAFAGLLRGSRTELVKAIGSELQVPAYAEIVLEGHIHPGEMADEGPYGDHTGYYNEVDRFPVFTVERITHRKNPIYHSTYTGRPPDEPAILGVALNEVFVPILQKQFPEIVDFYLPPEGCSYRMAVVTMKKQYPGHAKRVMLGVWSFLRQFMYTKFVIVTDDDINARDWNDVIWAITTRMDPKRDTVMIDNTPIDYLDFASPISGLGSKMGLDATHKWPGETNREWGRAIVQDPAVKRRVDELWLQLGID.

Asn172 contacts Mn(2+). Residues 175–177, 189–191, and 194–195 each bind prenylated FMN; these read IYR, RWL, and RG. Glu238 is a binding site for Mn(2+). The Proton donor role is filled by Asp287.

Belongs to the UbiD family. Homohexamer. Requires prenylated FMN as cofactor. It depends on Mn(2+) as a cofactor.

It is found in the cell membrane. The catalysed reaction is a 4-hydroxy-3-(all-trans-polyprenyl)benzoate + H(+) = a 2-(all-trans-polyprenyl)phenol + CO2. It functions in the pathway cofactor biosynthesis; ubiquinone biosynthesis. Catalyzes the decarboxylation of 3-octaprenyl-4-hydroxy benzoate to 2-octaprenylphenol, an intermediate step in ubiquinone biosynthesis. This chain is 3-octaprenyl-4-hydroxybenzoate carboxy-lyase, found in Stutzerimonas stutzeri (strain A1501) (Pseudomonas stutzeri).